The sequence spans 265 residues: Undecaprenyl-diphosphatase (265 aa).

8 consecutive transmembrane segments (helical) span residues 1 to 21, 39 to 61, 85 to 105, 115 to 135, 149 to 169, 187 to 207, 218 to 238, and 244 to 264; these read MDFIHILALAILQGLTEFLPI, QGLAFDVAVHLGTLVAVISYFRL, LAWAVLLGTLPVGLVGIMLTE, LIIAWSTVGFGFLLAYADWAG, ILFIGLAQALALIPGTSRSGI, FSFLLAIPVILLAGGLAALDL, ALALGALISGLCAYACIHYFF, and IGMLPFAVYRLLLGALLFYLF.

Belongs to the UppP family.

It is found in the cell inner membrane. It carries out the reaction di-trans,octa-cis-undecaprenyl diphosphate + H2O = di-trans,octa-cis-undecaprenyl phosphate + phosphate + H(+). Catalyzes the dephosphorylation of undecaprenyl diphosphate (UPP). Confers resistance to bacitracin. The protein is Undecaprenyl-diphosphatase of Nitrosococcus oceani (strain ATCC 19707 / BCRC 17464 / JCM 30415 / NCIMB 11848 / C-107).